A 382-amino-acid polypeptide reads, in one-letter code: uncharacterized protein (382 aa).

Helical transmembrane passes span 8 to 28 (VLLL…LNTL), 41 to 61 (WQVG…TLIA), 73 to 93 (SYHC…LTVD), 94 to 114 (FWSW…IWVI), 133 to 153 (AAYM…LGIV), 157 to 177 (LLSV…PLLF), 208 to 228 (GCII…LYLS), 274 to 294 (VVIL…ALFI), 325 to 345 (ALLM…SLLM), and 349 to 369 (SDNL…MMLL).

This sequence belongs to the major facilitator superfamily. YcaD (TC 2.A.1.26) family.

The protein localises to the cell inner membrane. This is an uncharacterized protein from Yersinia pseudotuberculosis serotype O:3 (strain YPIII).